The following is a 557-amino-acid chain: Membrane protein insertase YidC (557 aa).

The next 5 helical transmembrane spans lie at 3 to 23 (IKRTVLWVIFFMSAVMLFDNW), 363 to 383 (FVGNWGWAIVLLTLLIKAVFF), 437 to 457 (LPVVIQIPVFISLYWVLLASV), 476 to 496 (PYFILPVLMAVSMFVQTKLNP), and 507 to 527 (MMFMPIAFSVMFFFFPAGLVL).

The protein belongs to the OXA1/ALB3/YidC family. Type 1 subfamily. Interacts with the Sec translocase complex via SecD. Specifically interacts with transmembrane segments of nascent integral membrane proteins during membrane integration.

It localises to the cell inner membrane. Required for the insertion and/or proper folding and/or complex formation of integral membrane proteins into the membrane. Involved in integration of membrane proteins that insert both dependently and independently of the Sec translocase complex, as well as at least some lipoproteins. Aids folding of multispanning membrane proteins. The chain is Membrane protein insertase YidC from Burkholderia thailandensis (strain ATCC 700388 / DSM 13276 / CCUG 48851 / CIP 106301 / E264).